Reading from the N-terminus, the 296-residue chain is Protoheme IX farnesyltransferase (296 aa).

Residues 1 to 9 (MMFKQYLQV) lie on the Cytoplasmic side of the membrane. A helical membrane pass occupies residues 10–28 (TKPGIIFGNLISVIGGFLL). Residues 29–37 (ASKGSIDYP) lie on the Periplasmic side of the membrane. The chain crosses the membrane as a helical span at residues 38 to 56 (LFIYTLVGVSLVVASGCVF). Residues 57-78 (NNYIDRDIDRKMERTKNRVLVK) are Cytoplasmic-facing. Residues 79-97 (GLISPAVSLVYATLLGIAG) form a helical membrane-spanning segment. The Periplasmic segment spans residues 98-107 (FMLLWFGANP). A helical transmembrane segment spans residues 108-126 (LACWLGVMGFVVYVGVYSL). Topologically, residues 127-197 (YMKRHSVYGT…YQAANIPVLP (71 aa)) are cytoplasmic. Residues 198-216 (VVKGISVAKNHITLYIIAF) traverse the membrane as a helical segment. Over 217-228 (AVATLMLSLGGY) the chain is Periplasmic. The chain crosses the membrane as a helical span at residues 229-247 (AGYKYLVVAAAVSVWWLGM). Over 248–268 (ALRGYKVADDRIWARKLFGFS) the chain is Cytoplasmic. The chain crosses the membrane as a helical span at residues 269–287 (IIAITALSVMMSVDFMVPD). Residues 288–296 (SHTLLAAVW) are Periplasmic-facing.

It belongs to the UbiA prenyltransferase family. Protoheme IX farnesyltransferase subfamily.

The protein resides in the cell inner membrane. The enzyme catalyses heme b + (2E,6E)-farnesyl diphosphate + H2O = Fe(II)-heme o + diphosphate. Its pathway is porphyrin-containing compound metabolism; heme O biosynthesis; heme O from protoheme: step 1/1. Converts heme B (protoheme IX) to heme O by substitution of the vinyl group on carbon 2 of heme B porphyrin ring with a hydroxyethyl farnesyl side group. The polypeptide is Protoheme IX farnesyltransferase (Escherichia coli O139:H28 (strain E24377A / ETEC)).